Consider the following 1039-residue polypeptide: Protein male-specific lethal-1 (1039 aa).

A compositionally biased stretch (basic residues) spans 1 to 13 (MDKRFKWPPKKRA). 2 disordered regions span residues 1 to 44 (MDKR…HLHQ) and 171 to 199 (RRKN…QKLI). At Ser18 the chain carries Phosphoserine. Ser238 bears the Phosphoserine mark. 4 disordered regions span residues 244–266 (HAGA…GEFN), 358–454 (GQSV…GNQN), 485–691 (KKDK…EIDV), and 729–799 (IYPP…SSTT). Basic and acidic residues predominate over residues 255-266 (KRSESKGRGEFN). Over residues 368–392 (EEDDDEDDEDDENSDKDDDSEEDDY) the composition is skewed to acidic residues. Positions 397–407 (SDADVNARTEE) are enriched in basic and acidic residues. The span at 431 to 445 (AHSTPNHQQKSSTQA) shows a compositional bias: polar residues. The residue at position 433 (Ser433) is a Phosphoserine. Thr434 carries the post-translational modification Phosphothreonine. 2 positions are modified to phosphoserine: Ser492 and Ser496. Composition is skewed to basic and acidic residues over residues 504–515 (PHQEDAIVDHNA) and 523–570 (PKPD…DAPK). Composition is skewed to polar residues over residues 581 to 592 (TKTSSRESTLPK) and 609 to 625 (NHQS…TQRL). Ser585 bears the Phosphoserine mark. The residue at position 659 (Thr659) is a Phosphothreonine. A phosphoserine mark is found at Ser682 and Ser684. Phosphothreonine is present on Thr747. Ser749 bears the Phosphoserine mark. Residues Thr750, Thr751, and Thr753 each carry the phosphothreonine modification. A compositionally biased stretch (polar residues) spans 759-768 (QHAVTSSMDQ). Phosphoserine is present on residues Ser764 and Ser765. Thr788 carries the post-translational modification Phosphothreonine. The residue at position 810 (Ser810) is a Phosphoserine. Phosphothreonine is present on residues Thr813 and Thr832. Residues 865-983 (SLEIPKWRDV…EARDDFGVPW (119 aa)) form the PEHE domain. A phosphoserine mark is found at Ser879 and Ser889. The segment at 886–904 (ELLSDATFERRHQKYVKDE) is interaction with mof HAT domain. The interval 1011-1039 (IPTTAAEARHQENHSSYVFPKRRKRQKNR) is disordered. Thr1014 carries the post-translational modification Phosphothreonine. Position 1025 is a phosphoserine (Ser1025). Basic residues predominate over residues 1030 to 1039 (PKRRKRQKNR). The Nuclear localization signal motif lies at 1032–1037 (RRKRQK).

This sequence belongs to the msl-1 family. Component of the male-specific lethal (MSL) histone acetyltransferase complex, composed of mof, mle, msl-1, msl-2 and msl-3 proteins, as well as roX1 and roX2 non-coding RNAs. Interacts (via PEHE domain) with mof (via HAT domain) and msl-3 (via MRG domain); both interactions are direct. Interacts with tamo via the nuclear localization signal. Component of a maternal MSL subcomplex composed of mof, msl-1 and msl-3. In terms of processing, phosphorylation at Ser-18, Thr743, Thr-747 and Thr-751 is required to promote phosphorylation of 'Ser-5' of the C-terminal heptapeptide repeat domain (CTD) of the largest RNA polymerase II subunit Polr2A. Phosphorylated by Cdk7 in vitro. In contrast, phosphorylation at Ser-18, Thr743, Thr-747 and Thr-751 does not affect its role in dosage compensation in males. Ubiquitinated by msl-2.

It localises to the nucleus. Its subcellular location is the chromosome. Component of the male-specific lethal (MSL) histone acetyltransferase complex, a multiprotein complex essential for elevating transcription of the single X chromosome in the male (X chromosome dosage compensation). The MSL complex specifically associates with the single X chromosome in males and mediates formation of H4K16ac, promoting a two-fold activation of X chromosome. In complex with msl-2, promotes ubiquitination of histone H2B. In addition to its role in dosage compensation in males, regulates the activity of gene promoters: acts together with Cdk7 to promote phosphorylation of 'Ser-5' of the C-terminal heptapeptide repeat domain (CTD) of the largest RNA polymerase II subunit Polr2A. This is Protein male-specific lethal-1 from Drosophila melanogaster (Fruit fly).